The chain runs to 197 residues: Probable GTP-binding protein EngB (197 aa).

Residues 26 to 197 enclose the EngB-type G domain; it reads ELPEIALAGR…EAWDAILEKL (172 aa). Residues 34-41, 61-65, 79-82, 146-149, and 178-180 each bind GTP; these read GRSNVGKS, GKTQL, DVPG, TKAD, and FSS. Positions 41 and 63 each coordinate Mg(2+).

The protein belongs to the TRAFAC class TrmE-Era-EngA-EngB-Septin-like GTPase superfamily. EngB GTPase family. It depends on Mg(2+) as a cofactor.

In terms of biological role, necessary for normal cell division and for the maintenance of normal septation. The sequence is that of Probable GTP-binding protein EngB from Streptococcus pneumoniae (strain CGSP14).